The following is a 182-amino-acid chain: Large ribosomal subunit protein uL6 (182 aa).

Belongs to the universal ribosomal protein uL6 family. Part of the 50S ribosomal subunit.

In terms of biological role, this protein binds to the 23S rRNA, and is important in its secondary structure. It is located near the subunit interface in the base of the L7/L12 stalk, and near the tRNA binding site of the peptidyltransferase center. This Haloquadratum walsbyi (strain DSM 16790 / HBSQ001) protein is Large ribosomal subunit protein uL6.